The chain runs to 379 residues: Alcohol dehydrogenase 1 (379 aa).

Zn(2+) is bound by residues cysteine 47, threonine 49, histidine 69, cysteine 99, cysteine 102, cysteine 105, cysteine 113, and cysteine 177. An alcohol-binding residues include threonine 49 and histidine 69. NAD(+) is bound at residue threonine 49. Residues 202-207 (GLGAVG), aspartate 226, arginine 231, threonine 272, valine 295, 295-297 (VGV), phenylalanine 322, and arginine 372 each bind NAD(+).

Belongs to the zinc-containing alcohol dehydrogenase family. In terms of assembly, homodimer. Zn(2+) serves as cofactor.

Its subcellular location is the cytoplasm. It catalyses the reaction a primary alcohol + NAD(+) = an aldehyde + NADH + H(+). The catalysed reaction is a secondary alcohol + NAD(+) = a ketone + NADH + H(+). In Hordeum vulgare (Barley), this protein is Alcohol dehydrogenase 1 (ADH1).